A 332-amino-acid polypeptide reads, in one-letter code: MSGIWVLLSLVFTCIAGPLSKGDDAQVTDPDSEMVKLNITKRESECPEGQHREGQFCCQPCPPGKRKHADCTSPGGAPQCVPCSEGEDYTDKNHHSSKCRRCRVCDGEHGLEVEKNCTRTQNTKCRCKPNFFCHTSQCEHCNPCTTCEHGVIENCTPTSNTKCREVFQSAGSRSNLHWLWALLILIPVPALVYREVKRRCRRKENGYQKPITSNAEEVPMIKDVDLGKYITRIAEQMKITEVKDFVRKNGIEETKIDEIMHDNPKDTAEQKVQLLRNWYLYHGKKDAYCTLIQGLRKAKLSALADKINDIVQKDVTSEQENANSQNENESLT.

A signal peptide spans 1–16 (MSGIWVLLSLVFTCIA). At 17 to 175 (GPLSKGDDAQ…VFQSAGSRSN (159 aa)) the chain is on the extracellular side. A glycan (N-linked (GlcNAc...) asparagine) is linked at Asn38. TNFR-Cys repeat units lie at residues 45–81 (ECPE…PQCV), 82–125 (PCSE…NTKC), and 126–164 (RCKP…TKCR). 9 disulfides stabilise this stretch: Cys46–Cys57, Cys58–Cys71, Cys61–Cys80, Cys83–Cys99, Cys102–Cys117, Cys105–Cys125, Cys127–Cys141, Cys144–Cys155, and Cys147–Cys163. Asn116 is a glycosylation site (N-linked (GlcNAc...) asparagine). A helical transmembrane segment spans residues 176-192 (LHWLWALLILIPVPALV). Over 193 to 332 (YREVKRRCRR…NSQNENESLT (140 aa)) the chain is Cytoplasmic. Cys200 carries S-palmitoyl cysteine lipidation. Residues 210 to 314 (PITSNAEEVP…DKINDIVQKD (105 aa)) are interaction with HIPK3. A Phosphothreonine modification is found at Thr212. The tract at residues 227–251 (GKYITRIAEQMKITEVKDFVRKNGI) is interaction with CALM. The 85-residue stretch at 227 to 311 (GKYITRIAEQ…ALADKINDIV (85 aa)) folds into the Death domain.

Component of the death-induced signaling complex (DISC) composed of cell surface receptor FAS/CD95, adapter protein FADD and the CASP8 protease; recruitment of CASP8 to the complex is required for processing of CASP8 into the p18 and p10 subunits. Interacts directly (via DED domain) with NOL3 (via CARD domain); inhibits death-inducing signaling complex (DISC) assembly by inhibiting the increase in FAS-FADD binding induced by FAS activation. Binds DAXX. Interacts with HIPK3. Part of a complex containing HIPK3 and FADD. Binds RIPK1 and FAIM2. Interacts with BABAM2 and FEM1B. Interacts with CALM. In the absence of stimulation, interacts with BIRC2, DDX3X and GSK3B. The interaction with BIRC2 and DDX3X is further enhanced upon receptor stimulation and accompanied by DDX3X and BIRC2 cleavage. Palmitoylated. Palmitoylation by ZDHHC7 prevents the lysosomal degradation of FAS regulating its expression at the plasma membrane.

It localises to the cell membrane. The protein localises to the membrane raft. Its function is as follows. Receptor for TNFSF6/FASLG. The adapter molecule FADD recruits caspase CASP8 to the activated receptor. The resulting death-inducing signaling complex (DISC) performs CASP8 proteolytic activation which initiates the subsequent cascade of caspases (aspartate-specific cysteine proteases) mediating apoptosis. FAS-mediated apoptosis may have a role in the induction of peripheral tolerance, in the antigen-stimulated suicide of mature T-cells, or both. This chain is Tumor necrosis factor receptor superfamily member 6 (FAS), found in Sus scrofa (Pig).